The following is a 748-amino-acid chain: Signal transducer and activator of transcription 4 (748 aa).

The 96-residue stretch at 569–664 (WIDGYVMGFV…ENPLKYLYPD (96 aa)) folds into the SH2 domain. Position 667 is an N6-acetyllysine (Lys-667). Tyr-693 carries the phosphotyrosine; by JAK modification. Ser-721 bears the Phosphoserine; by MAP2K6 mark.

Belongs to the transcription factor STAT family. As to quaternary structure, forms a homodimer or a heterodimer with a related family member. Interacts with ARL2BP. The SH2 domain interacts, in vitro, with IL12RB2 via a short cytoplasmic domain. Interacts with STAT1. Interacts with JUN; this complex efficiently interacts with the AP-1-related sequence of the IFN-gamma. Post-translationally, acetylation at Lys-667 is required for JAK2-mediated phosphorylation and activation of STAT4. In terms of processing, tyrosine phosphorylated upon IL12 and IFN-alpha activation, but not by IFN-gamma in T-lymphocytes and NK cells. Serine phosphorylation is required for maximal transcriptional activity but not for DNA binding. Phosphorylation by MAP2K6 at Ser-721 is required for full transcriptional activity induced by IL12. However this serine phosphorylation is not required for cell proliferation although critical for IFN-gamma production.

The protein localises to the cytoplasm. It localises to the nucleus. Transcriptional regulator mainly expressed in hematopoietic cells that plays a critical role in cellular growth, differentiation and immune response. Plays a key role in the differentiation of T-helper 1 cells and the production of interferon-gamma. Also participates in multiple neutrophil functions including chemotaxis and production of the neutrophil extracellular traps. After IL12 binding to its receptor IL12RB2, STAT4 interacts with the intracellular domain of IL12RB2 and becomes tyrosine phosphorylated. Phosphorylated STAT4 then homodimerizes and migrates to the nucleus where it can recognize STAT target sequences present in IL12 responsive genes. Although IL12 appears to be the predominant activating signal, STAT4 can also be phosphorylated and activated in response to IFN-gamma stimulation via JAK1 and TYK2 and in response to different interleukins including IL23, IL2 and IL35. Transcription activation of IFN-gamma gene is mediated by interaction with JUN that forms a complex that efficiently interacts with the AP-1-related sequence of the IFN-gamma promoter. In response to IFN-alpha/beta signaling, acts as a transcriptional repressor and suppresses IL5 and IL13 mRNA expression during response to T-cell receptor (TCR) activation. This Homo sapiens (Human) protein is Signal transducer and activator of transcription 4 (STAT4).